Consider the following 264-residue polypeptide: Meiotically up-regulated gene 162 protein (264 aa).

7 helical membrane passes run 18–38 (IVIF…WNLK), 54–74 (LWIY…AGSA), 84–104 (VFQV…GYSF), 140–160 (IISI…LLFL), 174–194 (HLSY…IKLI), 199–219 (FVLG…SLIT), and 223–243 (LISY…IWIY).

Its subcellular location is the endoplasmic reticulum membrane. Has a role in meiosis. The polypeptide is Meiotically up-regulated gene 162 protein (mug162) (Schizosaccharomyces pombe (strain 972 / ATCC 24843) (Fission yeast)).